Consider the following 200-residue polypeptide: dTTP/UTP pyrophosphatase (200 aa).

The active-site Proton acceptor is aspartate 81.

The protein belongs to the Maf family. YhdE subfamily. A divalent metal cation serves as cofactor.

It is found in the cytoplasm. It carries out the reaction dTTP + H2O = dTMP + diphosphate + H(+). The enzyme catalyses UTP + H2O = UMP + diphosphate + H(+). Its function is as follows. Nucleoside triphosphate pyrophosphatase that hydrolyzes dTTP and UTP. May have a dual role in cell division arrest and in preventing the incorporation of modified nucleotides into cellular nucleic acids. The sequence is that of dTTP/UTP pyrophosphatase from Albidiferax ferrireducens (strain ATCC BAA-621 / DSM 15236 / T118) (Rhodoferax ferrireducens).